A 243-amino-acid chain; its full sequence is Homeobox protein nob-1 (243 aa).

Residues 1–12 (MISVMQQMINND) are compositionally biased toward polar residues. Disordered stretches follow at residues 1–23 (MISV…SITS) and 40–67 (SIQG…TGMV). Residues 162-221 (GKKKRQPYKKDQISRLEYEYSVNQYLTNKRRSELSAQLMLDEKQVKVWFQNRRMKDKKLR) constitute a DNA-binding region (homeobox).

The protein belongs to the abd-b homeobox family. In terms of assembly, interacts with nuclear receptor nhr-25. Interacts with geminin homolog gmn-1. Interacts with homeodomain protein ceh-20.

It is found in the nucleus. In terms of biological role, transcription factor, involved in posterior embryonic patterning, morphogenetic movements of the posterior hypodermis, and cell fate specification. Binds to the 5'-TAGT-3' motif in regulatory elements of genes, including Meis protein psa-3 and microRNA mir-57. Involved in a negative regulatory loop with mir-57 to specify posterior cell identities. Required for asymmetric division of the T hypodermal cell, acting via the regulation of asymmetric expression of psa-3 in cooperation with ceh-20 and the Wnt-MAPK pathway. Involved in the regulation of the onset of non-apoptotic cell death in the linker cell, acting together with the Wnt signaling pathway. Involved in promoting embryogenesis, in concert with orphan nuclear receptor nhr-25. May regulate expression of transcription factor dmd-3. The chain is Homeobox protein nob-1 from Caenorhabditis elegans.